The sequence spans 382 residues: MKWTVLLLEYFLVKVLVLLYSADGEAQQLEGFIMLSGSNGSRDEESVSEPPHTEDKCRGYYDVMGQWDPPFVCQTGNYLYCCGTCGFRFCCAYKNSRLDQSTCKNYDTPVWLTGQTPYKKTLDPRHDPTKDKTNLIVYIICGVVAIMALVGIFTKLGLEKAHRPHRESMSRAVASVMQGARQGQHEEAIGMHTQHYDTVQARANNMQAGQINNMMQTHPYPALSQLSHVYEQQQSAKDLNKYASLKAVAAKANGDFLNKQHRHLVELAAKGNLPLHPIRMEHVEPTATYVTEVPCIKQNGQKPKSIKANVSHPAMAYSSNTIANPGMLRSWEAAETAGRRKTYNPRKMCMVEQVNELHTARSHHYLPTQPYFVTNSKAEVTV.

Positions Met1–Ala26 are cleaved as a signal peptide. Residues Gln27–Lys132 are Extracellular-facing. N-linked (GlcNAc...) asparagine glycosylation occurs at Asn39. Residues Thr133–Phe153 traverse the membrane as a helical segment. Over Thr154–Val382 the chain is Cytoplasmic.

Belongs to the shisa family. SHISA9 subfamily. In terms of assembly, component of some AMPA receptors (ionotropic glutamate receptors) complex.

The protein localises to the cell projection. It localises to the dendritic spine membrane. Its subcellular location is the synapse. Regulator of short-term neuronal synaptic plasticity in the dentate gyrus. Associates with AMPA receptors (ionotropic glutamate receptors) in synaptic spines and promotes AMPA receptor desensitization at excitatory synapses. This chain is Protein shisa-9A (shisa9a), found in Danio rerio (Zebrafish).